A 335-amino-acid chain; its full sequence is Ribosomal RNA large subunit methyltransferase F (335 aa).

It belongs to the methyltransferase superfamily. METTL16/RlmF family.

It localises to the cytoplasm. The catalysed reaction is adenosine(1618) in 23S rRNA + S-adenosyl-L-methionine = N(6)-methyladenosine(1618) in 23S rRNA + S-adenosyl-L-homocysteine + H(+). Specifically methylates the adenine in position 1618 of 23S rRNA. The polypeptide is Ribosomal RNA large subunit methyltransferase F (Yersinia enterocolitica serotype O:8 / biotype 1B (strain NCTC 13174 / 8081)).